A 422-amino-acid polypeptide reads, in one-letter code: GTPase Obg (422 aa).

The Obg domain maps to 4 to 161 (LHFVDEAFNE…FKIKTELKVL (158 aa)). The region spanning 162–327 (ADIGLLGFPS…LKYEMSSLLQ (166 aa)) is the OBG-type G domain. GTP contacts are provided by residues 168–175 (GFPSVGKS), 193–197 (FTTIK), 214–217 (DLPG), 281–284 (NKMD), and 308–310 (SLV). Residues serine 175 and threonine 195 each coordinate Mg(2+). Residues 345–422 (TLPDNQNTIS…KICDRLFYFL (78 aa)) enclose the OCT domain.

This sequence belongs to the TRAFAC class OBG-HflX-like GTPase superfamily. OBG GTPase family. Monomer. Mg(2+) serves as cofactor.

It localises to the cytoplasm. Its function is as follows. An essential GTPase which binds GTP, GDP and possibly (p)ppGpp with moderate affinity, with high nucleotide exchange rates and a fairly low GTP hydrolysis rate. Plays a role in control of the cell cycle, stress response, ribosome biogenesis and in those bacteria that undergo differentiation, in morphogenesis control. The sequence is that of GTPase Obg from Onion yellows phytoplasma (strain OY-M).